The primary structure comprises 317 residues: R-phycoerythrin gamma chain, chloroplastic (317 aa).

The transit peptide at 1 to 40 (MASPAFAVNGMFTPVKLSGSFTASMPVDSKPAASATGVRM) directs the protein to the chloroplast. Residues Cys94 and Cys133 each contribute to the phycourobilin site. Residue Cys210 participates in (2R,3E)-phycoerythrobilin binding. Cys297 is a phycourobilin binding site.

In terms of assembly, heteromer of 1 alpha, 1 beta and 2 gamma chains. In terms of processing, contains four covalently linked bilin chromophores.

It localises to the plastid. It is found in the chloroplast thylakoid membrane. Its function is as follows. Critical for the incorporation of phycoerythrin in the phycobilisome complex. In Aglaothamnion neglectum (Red alga), this protein is R-phycoerythrin gamma chain, chloroplastic.